Here is a 633-residue protein sequence, read N- to C-terminus: Putative ankyrin repeat protein L774 (633 aa).

7 ANK repeats span residues 91–120, 123–152, 221–250, 252–275, 338–367, 369–393, and 517–546; these read IYGHLYCLYIKNNRLDLCDYLIQSNYEYDP, NCDDILEFVPDENEADVLMYIINNNNFFKI, NVNKLLEIACIFSITEIVTHLLDIGTEYDF, TILKSHISLHILKIFLNRGNILDS, DYDVVMKKAIMNSSLDIIDYCISNGTDVNN, MTYAFQHYNQSCFTHLLNQGGTLST, and DNLKILFVAIMKYDIDMLKFLFEINDNSND.

The chain is Putative ankyrin repeat protein L774 from Acanthamoeba polyphaga mimivirus (APMV).